A 298-amino-acid polypeptide reads, in one-letter code: GTPase Era (298 aa).

The 168-residue stretch at 7 to 174 folds into the Era-type G domain; sequence RSGFVSIIGR…VELVRKALPQ (168 aa). Residues 15–22 form a G1 region; the sequence is GRPNVGKS. 15–22 provides a ligand contact to GTP; sequence GRPNVGKS. The G2 stretch occupies residues 41–45; the sequence is QTTRN. The G3 stretch occupies residues 62 to 65; the sequence is DTPG. GTP contacts are provided by residues 62–66 and 124–127; these read DTPGI and NKVD. The G4 stretch occupies residues 124-127; the sequence is NKVD. The interval 153 to 155 is G5; the sequence is ISA. The KH type-2 domain occupies 205–283; the sequence is TRDEVPYATA…FLELFVRVRK (79 aa).

The protein belongs to the TRAFAC class TrmE-Era-EngA-EngB-Septin-like GTPase superfamily. Era GTPase family. In terms of assembly, monomer.

Its subcellular location is the cytoplasm. The protein localises to the cell inner membrane. Its function is as follows. An essential GTPase that binds both GDP and GTP, with rapid nucleotide exchange. Plays a role in 16S rRNA processing and 30S ribosomal subunit biogenesis and possibly also in cell cycle regulation and energy metabolism. This chain is GTPase Era, found in Geobacter metallireducens (strain ATCC 53774 / DSM 7210 / GS-15).